Reading from the N-terminus, the 272-residue chain is Tryptophan synthase alpha chain (272 aa).

Residues E49 and E60 each act as proton acceptor in the active site.

The protein belongs to the TrpA family. As to quaternary structure, tetramer of two alpha and two beta chains.

The catalysed reaction is (1S,2R)-1-C-(indol-3-yl)glycerol 3-phosphate + L-serine = D-glyceraldehyde 3-phosphate + L-tryptophan + H2O. The protein operates within amino-acid biosynthesis; L-tryptophan biosynthesis; L-tryptophan from chorismate: step 5/5. The alpha subunit is responsible for the aldol cleavage of indoleglycerol phosphate to indole and glyceraldehyde 3-phosphate. The protein is Tryptophan synthase alpha chain of Legionella pneumophila (strain Paris).